The following is a 200-amino-acid chain: Cation channel sperm-associated auxiliary subunit zeta (200 aa).

The segment covering 1–29 has biased composition (basic and acidic residues); the sequence is MEEKPSKVSLKSSDRQGSDEESVHSDTRD. Disordered stretches follow at residues 1-31 and 58-78; these read MEEKPSKVSLKSSDRQGSDEESVHSDTRDLW and NISKTRGWHSPGRGSLDEGYK.

Component of the CatSper complex or CatSpermasome composed of the core pore-forming members CATSPER1, CATSPER2, CATSPER3 and CATSPER4 as well as auxiliary members CATSPERB, CATSPERG, CATSPERD, CATSPERE, CATSPERZ, C2CD6/CATSPERT, TMEM249, TMEM262 and EFCAB9. HSPA1 may be an additional auxiliary complex member. The core complex members CATSPER1, CATSPER2, CATSPER3 and CATSPER4 form a heterotetrameric channel. The auxiliary CATSPERB, CATSPERG, CATSPERD and CATSPERE subunits form a pavilion-like structure over the pore which stabilizes the complex through interactions with CATSPER4, CATSPER3, CATSPER1 and CATSPER2 respectively. TMEM262/CATSPERH interacts with CATSPERB, further stabilizing the complex. C2CD6/CATSPERT interacts at least with CATSPERD and is required for targeting the CatSper complex in the flagellar membrane. Interacts with EFCAB9; the interaction is direct, Ca(2+)-dependent and connects EFCAB9 with the CatSper complex. Dissociates from EFCAB9 at elevated pH.

It localises to the cell projection. It is found in the cilium. The protein localises to the flagellum membrane. Its function is as follows. Auxiliary component of the CatSper complex, a complex involved in sperm cell hyperactivation. Sperm cell hyperactivation is needed for sperm motility which is essential late in the preparation of sperm for fertilization. Required for a distribution of the CatSper complex in linear quadrilateral nanodomains along the flagellum, maximizing fertilization inside the mammalian female reproductive tract. Together with EFCAB9, associates with the CatSper channel pore and is required for the two-row structure of each single CatSper channel. This chain is Cation channel sperm-associated auxiliary subunit zeta, found in Homo sapiens (Human).